Reading from the N-terminus, the 243-residue chain is Probable transcriptional regulatory protein BG0025 (243 aa).

Belongs to the TACO1 family.

The protein localises to the cytoplasm. This is Probable transcriptional regulatory protein BG0025 from Borrelia garinii subsp. bavariensis (strain ATCC BAA-2496 / DSM 23469 / PBi) (Borreliella bavariensis).